The chain runs to 177 residues: Large ribosomal subunit protein uL6 (177 aa).

Belongs to the universal ribosomal protein uL6 family. As to quaternary structure, part of the 50S ribosomal subunit.

Functionally, this protein binds to the 23S rRNA, and is important in its secondary structure. It is located near the subunit interface in the base of the L7/L12 stalk, and near the tRNA binding site of the peptidyltransferase center. The protein is Large ribosomal subunit protein uL6 of Rhodospirillum centenum (strain ATCC 51521 / SW).